Consider the following 269-residue polypeptide: NAD kinase (269 aa).

Aspartate 45 acts as the Proton acceptor in catalysis. NAD(+)-binding positions include 45 to 46 (DG), 121 to 122 (NE), arginine 147, aspartate 149, 160 to 165 (TAYNRS), and alanine 184.

It belongs to the NAD kinase family. It depends on a divalent metal cation as a cofactor.

The protein resides in the cytoplasm. It carries out the reaction NAD(+) + ATP = ADP + NADP(+) + H(+). Functionally, involved in the regulation of the intracellular balance of NAD and NADP, and is a key enzyme in the biosynthesis of NADP. Catalyzes specifically the phosphorylation on 2'-hydroxyl of the adenosine moiety of NAD to yield NADP. In Pediococcus pentosaceus (strain ATCC 25745 / CCUG 21536 / LMG 10740 / 183-1w), this protein is NAD kinase.